We begin with the raw amino-acid sequence, 66 residues long: Beta-mammal toxin Co3 (66 aa).

The LCN-type CS-alpha/beta domain occupies 1 to 66 (KEGYIVNYYD…VWPLPNKTCN (66 aa)). Cystine bridges form between C12-C65, C16-C41, C25-C46, and C29-C48.

Expressed by the venom gland.

It is found in the secreted. Functionally, beta toxins bind voltage-independently at site-4 of sodium channels (Nav) and shift the voltage of activation toward more negative potentials thereby affecting sodium channel activation and promoting spontaneous and repetitive firing. This toxin acts on human Nav1.2/SCN2A, Nav1.4/SCN4A and Nav1.6/SCN8A voltage-gated sodium channels. Also, it reduces the peak of sodium currents in Nav1.5/SCN5A at all potentials. In vivo, is lethal to mice when intraperitoneally injected at a dose of 5ug. No activity is observed when injected into crickets or woodlice. In Centruroides ornatus (Scorpion), this protein is Beta-mammal toxin Co3.